The chain runs to 400 residues: MNKSIIIILLITVLDAIGIGLIMPVLPTLLNEFVSENSLATHYGVLLALYATMQVIFAPILGRLSDKYGRKPILLFSLLGAALDYLLMAFSTTLWMLYIGRIIAGITGATGAVCASAMSDVTPAKNRTRYFGFLGGVFGVGLIIGPMLGGLLGDISAHMPFIFAAISHSILLILSLLFFRETQKREALVANRTPENQTASNTVTVFFKKSLYFWLATYFIIQLIGQIPATIWVLFTQYRFDWNTTSIGMSLAVLGVLHIFFQAIVAGKLAQKWGEKTTIMISMSIDMMGCLLLAWIGHVWVILPALICLAAGGMGQPALQGYLSKSVDDNAQGKLQGTLVSLTNITGIIGPLLFAFIYSYSVAYWDGLLWLMGAILYAMLLITAYFHQRKTTPKAVISTP.

11 consecutive transmembrane segments (helical) span residues I5 to V25, H42 to G62, P72 to T92, L94 to C114, F131 to L151, M159 to F179, L215 to F235, I247 to G267, L291 to A311, G337 to I357, and V362 to I382.

Belongs to the major facilitator superfamily. TCR/Tet family.

The protein resides in the cell inner membrane. In terms of biological role, resistance to tetracycline by an active tetracycline efflux. This is an energy-dependent process that decreases the accumulation of the antibiotic in whole cells. This protein functions as a metal-tetracycline/H(+) antiporter. This is Tetracycline resistance protein, class H (tetA) from Pasteurella multocida.